A 268-amino-acid chain; its full sequence is Phosphate import ATP-binding protein PstB 2 (268 aa).

The ABC transporter domain maps to 19–263; it reads YKVRNMAFFY…PKDKRTEDYI (245 aa). 51–58 lines the ATP pocket; that stretch reads GPSGCGKS.

It belongs to the ABC transporter superfamily. Phosphate importer (TC 3.A.1.7) family. As to quaternary structure, the complex is composed of two ATP-binding proteins (PstB), two transmembrane proteins (PstC and PstA) and a solute-binding protein (PstS).

Its subcellular location is the cell inner membrane. The enzyme catalyses phosphate(out) + ATP + H2O = ADP + 2 phosphate(in) + H(+). Part of the ABC transporter complex PstSACB involved in phosphate import. Responsible for energy coupling to the transport system. The polypeptide is Phosphate import ATP-binding protein PstB 2 (Gloeobacter violaceus (strain ATCC 29082 / PCC 7421)).